The following is a 556-amino-acid chain: Myb/SANT-like DNA-binding domain-containing protein 2 (556 aa).

Composition is skewed to polar residues over residues 1–10 (MAASCGSSQL) and 36–45 (GNPSLSDPST). The segment at 1-82 (MAASCGSSQL…GGASPSVSFS (82 aa)) is disordered. A compositionally biased stretch (gly residues) spans 56–74 (PAAGGAGLGGGGAAGGRGG). One can recognise a Myb-like domain in the interval 99–169 (SWTPAETNAL…QCRERIKTLR (71 aa)). Positions 431–458 (PRSPLAEPRGADPSNETPGELEVPSPQA) are disordered.

The polypeptide is Myb/SANT-like DNA-binding domain-containing protein 2 (MSANTD2) (Gallus gallus (Chicken)).